A 237-amino-acid polypeptide reads, in one-letter code: BTB/POZ domain-containing protein KCTD6 (237 aa).

Residues 1-104 (MDNGDWGYMM…FYQIEPLIQC (104 aa)) are interaction with ANK1 isoform Mu7. Residues 10–110 (MSDPVTLNVG…LIQCLNDPRP (101 aa)) form an interaction with CUL3 region. Positions 12–81 (DPVTLNVGGH…LRTSELTLPL (70 aa)) constitute a BTB domain. An interaction with USP21 region spans residues 113 to 187 (PMDTFEEVVE…TFGPCDYHQE (75 aa)).

Homopentamer. Interacts with KCTD11; KCTD6 and KCTD11 may associate in heteropentameric assemblies. Interacts (via BTB domain) with CUL3; initially a 4:4 stoichiometry has been reported, however, electron microscopy revealed pentameric states with a five-pointed pinwheel shape. The interaction with CUL3 is indicative for a participation in a BCR (BTB-CUL3-RBX1) E3 ubiquitin-protein ligase complex. Interacts with HDAC1; probably indirect as the interaction requires the presence of KCTD11. Interacts with USP21 (preferentially catalytic inactive form). Interacts with ANK1 isoform Mu7; detected in striated muscle. Interacts with USP11. As to expression, highly expressed in cerebellum and brain.

Its subcellular location is the cytoplasm. The protein resides in the myofibril. The protein localises to the sarcomere. It is found in the m line. It functions in the pathway protein modification; protein ubiquitination. Probable substrate-specific adapter of a BCR (BTB-CUL3-RBX1) E3 ubiquitin-protein ligase complex mediating the ubiquitination and subsequent proteasomal degradation of target proteins. Promotes the ubiquitination of HDAC1; the function seems to depend on KCTD11:KCTD6 oligomerization. Can function as antagonist of the Hedgehog pathway by affecting the nuclear transfer of transcription factor GLI1; the function probably occurs via HDAC1 down-regulation, keeping GLI1 acetylated and inactive. Inhibits cell growth and tumorigenicity of medulloblastoma (MDB). Involved in regulating protein levels of ANK1 isoform Mu7 probably implicating CUL3-dependent proteasomal degradation. This is BTB/POZ domain-containing protein KCTD6 (Kctd6) from Mus musculus (Mouse).